The following is a 271-amino-acid chain: Formamidopyrimidine-DNA glycosylase (271 aa).

Pro2 (schiff-base intermediate with DNA) is an active-site residue. Glu3 serves as the catalytic Proton donor. The active-site Proton donor; for beta-elimination activity is Lys57. DNA-binding residues include His90, Arg109, and Lys151. The FPG-type zinc-finger motif lies at His236–Gln270. Residue Arg260 is the Proton donor; for delta-elimination activity of the active site.

This sequence belongs to the FPG family. In terms of assembly, monomer. It depends on Zn(2+) as a cofactor.

The catalysed reaction is Hydrolysis of DNA containing ring-opened 7-methylguanine residues, releasing 2,6-diamino-4-hydroxy-5-(N-methyl)formamidopyrimidine.. It catalyses the reaction 2'-deoxyribonucleotide-(2'-deoxyribose 5'-phosphate)-2'-deoxyribonucleotide-DNA = a 3'-end 2'-deoxyribonucleotide-(2,3-dehydro-2,3-deoxyribose 5'-phosphate)-DNA + a 5'-end 5'-phospho-2'-deoxyribonucleoside-DNA + H(+). Involved in base excision repair of DNA damaged by oxidation or by mutagenic agents. Acts as a DNA glycosylase that recognizes and removes damaged bases. Has a preference for oxidized purines, such as 7,8-dihydro-8-oxoguanine (8-oxoG). Has AP (apurinic/apyrimidinic) lyase activity and introduces nicks in the DNA strand. Cleaves the DNA backbone by beta-delta elimination to generate a single-strand break at the site of the removed base with both 3'- and 5'-phosphates. This is Formamidopyrimidine-DNA glycosylase from Shewanella piezotolerans (strain WP3 / JCM 13877).